Consider the following 76-residue polypeptide: MFTLKKSMLLLFFLGTISLSLCEEERSADEDDGEKEVKRGIFSLIKTAAKFVGKNLLKQAGKAGMEHLACKANNQC.

A signal peptide spans 1–22; sequence MFTLKKSMLLLFFLGTISLSLC. A propeptide spans 23-37 (removed in mature form); sequence EEERSADEDDGEKEV. Cysteines 70 and 76 form a disulfide.

Belongs to the frog skin active peptide (FSAP) family. Esculentin subfamily. Expressed by the skin glands.

It localises to the secreted. Antimicrobial peptide. Active against a variety of Gram-negative and Gram-positive bacterial strains. Active against fungi. Shows strong hemolytic activity against human erythrocytes. The sequence is that of Esculentin-2MT2 from Amolops mantzorum (Sichuan torrent frog).